A 368-amino-acid chain; its full sequence is MLMSLSRRELIKKEIFDIEEYVPGRSIEEIASTYGLKPESIIKLGSNENPLGPSPKAVKALIEAAPGANIYPSADAHELREALSKYTGFPVSNIVASGPGMDGLLDGLCRIIIEKGDEVIVPIPTFSYYELPARACGAEPVFIRRNQDFSLNPEKILEAVSPRTKIIFLCSPNNPSGNLLPEADLRKIIENTDALVFVDEAYVEFADRNLAALVNEYDNVAVGRTFSKVFGLAGLRLGYGIMPEWLTKEYLRAATPFSVSLPALRAGLAALSDTEYLNKSINLAREGREYLKEKIPFKVYPSQANFVLVDVSPLKAKKVTESLLKKGIIVRPCDSFREAGDSFIRVTVGTPEQNEKVVRAFEISKSEV.

Lysine 228 is modified (N6-(pyridoxal phosphate)lysine).

This sequence belongs to the class-II pyridoxal-phosphate-dependent aminotransferase family. Histidinol-phosphate aminotransferase subfamily. It depends on pyridoxal 5'-phosphate as a cofactor.

It catalyses the reaction L-histidinol phosphate + 2-oxoglutarate = 3-(imidazol-4-yl)-2-oxopropyl phosphate + L-glutamate. The protein operates within amino-acid biosynthesis; L-histidine biosynthesis; L-histidine from 5-phospho-alpha-D-ribose 1-diphosphate: step 7/9. The polypeptide is Histidinol-phosphate aminotransferase (Methanosarcina mazei (strain ATCC BAA-159 / DSM 3647 / Goe1 / Go1 / JCM 11833 / OCM 88) (Methanosarcina frisia)).